Consider the following 128-residue polypeptide: Ribonuclease P protein component (128 aa).

The protein belongs to the RnpA family. In terms of assembly, consists of a catalytic RNA component (M1 or rnpB) and a protein subunit.

The catalysed reaction is Endonucleolytic cleavage of RNA, removing 5'-extranucleotides from tRNA precursor.. Its function is as follows. RNaseP catalyzes the removal of the 5'-leader sequence from pre-tRNA to produce the mature 5'-terminus. It can also cleave other RNA substrates such as 4.5S RNA. The protein component plays an auxiliary but essential role in vivo by binding to the 5'-leader sequence and broadening the substrate specificity of the ribozyme. The sequence is that of Ribonuclease P protein component from Chromohalobacter salexigens (strain ATCC BAA-138 / DSM 3043 / CIP 106854 / NCIMB 13768 / 1H11).